A 191-amino-acid chain; its full sequence is Protein GrpE (191 aa).

The segment covering 1 to 19 (MKDEHNQKHDHLSQKEPES) has biased composition (basic and acidic residues). The tract at residues 1-44 (MKDEHNQKHDHLSQKEPESYQKACACKEQQDEEMQEAGEKEGEI) is disordered.

This sequence belongs to the GrpE family. In terms of assembly, homodimer.

The protein resides in the cytoplasm. Functionally, participates actively in the response to hyperosmotic and heat shock by preventing the aggregation of stress-denatured proteins, in association with DnaK and GrpE. It is the nucleotide exchange factor for DnaK and may function as a thermosensor. Unfolded proteins bind initially to DnaJ; upon interaction with the DnaJ-bound protein, DnaK hydrolyzes its bound ATP, resulting in the formation of a stable complex. GrpE releases ADP from DnaK; ATP binding to DnaK triggers the release of the substrate protein, thus completing the reaction cycle. Several rounds of ATP-dependent interactions between DnaJ, DnaK and GrpE are required for fully efficient folding. The sequence is that of Protein GrpE from Helicobacter pylori (strain G27).